Here is a 238-residue protein sequence, read N- to C-terminus: NAD(P)H-quinone oxidoreductase subunit K 1 (238 aa).

Cys54, Cys55, Cys119, and Cys150 together coordinate [4Fe-4S] cluster.

This sequence belongs to the complex I 20 kDa subunit family. NDH-1 can be composed of about 15 different subunits; different subcomplexes with different compositions have been identified which probably have different functions. [4Fe-4S] cluster is required as a cofactor.

Its subcellular location is the cellular thylakoid membrane. The enzyme catalyses a plastoquinone + NADH + (n+1) H(+)(in) = a plastoquinol + NAD(+) + n H(+)(out). It catalyses the reaction a plastoquinone + NADPH + (n+1) H(+)(in) = a plastoquinol + NADP(+) + n H(+)(out). Functionally, NDH-1 shuttles electrons from an unknown electron donor, via FMN and iron-sulfur (Fe-S) centers, to quinones in the respiratory and/or the photosynthetic chain. The immediate electron acceptor for the enzyme in this species is believed to be plastoquinone. Couples the redox reaction to proton translocation, and thus conserves the redox energy in a proton gradient. Cyanobacterial NDH-1 also plays a role in inorganic carbon-concentration. This is NAD(P)H-quinone oxidoreductase subunit K 1 from Cyanothece sp. (strain PCC 7425 / ATCC 29141).